The chain runs to 29 residues: Cytochrome b6-f complex subunit 8 (29 aa).

The helical transmembrane segment at 3–23 (TVSIAWAALMVIFTFSISLVV) threads the bilayer.

The protein belongs to the PetN family. As to quaternary structure, the 4 large subunits of the cytochrome b6-f complex are cytochrome b6, subunit IV (17 kDa polypeptide, PetD), cytochrome f and the Rieske protein, while the 4 small subunits are PetG, PetL, PetM and PetN. The complex functions as a dimer.

Its subcellular location is the plastid. It localises to the chloroplast thylakoid membrane. Its function is as follows. Component of the cytochrome b6-f complex, which mediates electron transfer between photosystem II (PSII) and photosystem I (PSI), cyclic electron flow around PSI, and state transitions. The chain is Cytochrome b6-f complex subunit 8 from Psilotum nudum (Whisk fern).